The chain runs to 333 residues: Arginase (333 aa).

Met-1 is subject to N-acetylmethionine. Ser-16 carries the post-translational modification Phosphoserine. Thr-77 carries the phosphothreonine modification. Mn(2+) is bound by residues His-123, Asp-146, His-148, and Asp-150. Residues 148–152, 159–161, and Asp-205 contribute to the substrate site; these read HADIN and SGN. Residues Asp-256 and Asp-258 each contribute to the Mn(2+) site. The residue at position 270 (Thr-270) is a Phosphothreonine. The substrate site is built by Thr-270 and Glu-301.

This sequence belongs to the arginase family. Homotrimer. The cofactor is Mn(2+).

It catalyses the reaction L-arginine + H2O = urea + L-ornithine. It functions in the pathway nitrogen metabolism; urea cycle; L-ornithine and urea from L-arginine: step 1/1. The chain is Arginase (CAR1) from Saccharomyces cerevisiae (strain ATCC 204508 / S288c) (Baker's yeast).